A 432-amino-acid polypeptide reads, in one-letter code: Adenylosuccinate synthetase (432 aa).

GTP contacts are provided by residues 12-18 and 40-42; these read GDEGKGK and GHT. Aspartate 13 functions as the Proton acceptor in the catalytic mechanism. Positions 13 and 40 each coordinate Mg(2+). IMP contacts are provided by residues 13–16, 38–41, threonine 128, arginine 142, glutamine 223, threonine 238, and arginine 302; these read DEGK and NAGH. Catalysis depends on histidine 41, which acts as the Proton donor. 298–304 contacts substrate; it reads TVTGRPR. GTP contacts are provided by residues arginine 304, 330–332, and 412–414; these read LLD and SVG.

The protein belongs to the adenylosuccinate synthetase family. Homodimer. Requires Mg(2+) as cofactor.

The protein resides in the cytoplasm. The enzyme catalyses IMP + L-aspartate + GTP = N(6)-(1,2-dicarboxyethyl)-AMP + GDP + phosphate + 2 H(+). The protein operates within purine metabolism; AMP biosynthesis via de novo pathway; AMP from IMP: step 1/2. Its function is as follows. Plays an important role in the de novo pathway of purine nucleotide biosynthesis. Catalyzes the first committed step in the biosynthesis of AMP from IMP. The protein is Adenylosuccinate synthetase of Limosilactobacillus reuteri (strain DSM 20016) (Lactobacillus reuteri).